Consider the following 249-residue polypeptide: Triosephosphate isomerase (249 aa).

Residue Asn-9–Lys-11 participates in substrate binding. The active-site Electrophile is the His-94. Glu-166 functions as the Proton acceptor in the catalytic mechanism. Residues Gly-172 and Gly-232–Gly-233 contribute to the substrate site.

The protein belongs to the triosephosphate isomerase family. As to quaternary structure, homodimer.

It localises to the cytoplasm. It carries out the reaction D-glyceraldehyde 3-phosphate = dihydroxyacetone phosphate. The protein operates within carbohydrate biosynthesis; gluconeogenesis. It functions in the pathway carbohydrate degradation; glycolysis; D-glyceraldehyde 3-phosphate from glycerone phosphate: step 1/1. Its function is as follows. Involved in the gluconeogenesis. Catalyzes stereospecifically the conversion of dihydroxyacetone phosphate (DHAP) to D-glyceraldehyde-3-phosphate (G3P). This Xylella fastidiosa (strain M12) protein is Triosephosphate isomerase.